A 512-amino-acid polypeptide reads, in one-letter code: Maturase K (512 aa).

The protein belongs to the intron maturase 2 family. MatK subfamily.

The protein localises to the plastid. The protein resides in the chloroplast. Usually encoded in the trnK tRNA gene intron. Probably assists in splicing its own and other chloroplast group II introns. This is Maturase K from Acer campestre (Field maple).